The chain runs to 546 residues: uncharacterized protein (546 aa).

3 disordered regions span residues 37–101 (KEND…NQKL), 269–300 (QNKAAADLRKTESHGTHSQSTPPQHSSSQPEV), and 392–443 (LSDL…TSAC). Composition is skewed to basic and acidic residues over residues 81–93 (DDVKEKKHPENNQ) and 274–283 (ADLRKTESHG). Residues 284 to 298 (THSQSTPPQHSSSQP) show a composition bias toward low complexity.

This is an uncharacterized protein from Homo sapiens (Human).